A 120-amino-acid polypeptide reads, in one-letter code: Large ribosomal subunit protein bL19 (120 aa).

Belongs to the bacterial ribosomal protein bL19 family.

In terms of biological role, this protein is located at the 30S-50S ribosomal subunit interface and may play a role in the structure and function of the aminoacyl-tRNA binding site. The protein is Large ribosomal subunit protein bL19 of Chlorobium phaeobacteroides (strain DSM 266 / SMG 266 / 2430).